The chain runs to 262 residues: Type III pantothenate kinase (262 aa).

6–13 provides a ligand contact to ATP; the sequence is DVGNTNAV. Substrate is bound by residues Tyr100 and 107–110; that span reads GADR. Asp109 serves as the catalytic Proton acceptor. Asp129 contributes to the K(+) binding site. Thr132 is a binding site for ATP. Position 184 (Thr184) interacts with substrate.

It belongs to the type III pantothenate kinase family. In terms of assembly, homodimer. The cofactor is NH4(+). K(+) is required as a cofactor.

The protein localises to the cytoplasm. It carries out the reaction (R)-pantothenate + ATP = (R)-4'-phosphopantothenate + ADP + H(+). It participates in cofactor biosynthesis; coenzyme A biosynthesis; CoA from (R)-pantothenate: step 1/5. In terms of biological role, catalyzes the phosphorylation of pantothenate (Pan), the first step in CoA biosynthesis. The chain is Type III pantothenate kinase from Bacillus cereus (strain B4264).